We begin with the raw amino-acid sequence, 140 residues long: ATP synthase epsilon chain (140 aa).

The protein belongs to the ATPase epsilon chain family. In terms of assembly, F-type ATPases have 2 components, CF(1) - the catalytic core - and CF(0) - the membrane proton channel. CF(1) has five subunits: alpha(3), beta(3), gamma(1), delta(1), epsilon(1). CF(0) has three main subunits: a, b and c.

The protein localises to the cell inner membrane. Its function is as follows. Produces ATP from ADP in the presence of a proton gradient across the membrane. This chain is ATP synthase epsilon chain, found in Xanthomonas oryzae pv. oryzae (strain PXO99A).